The primary structure comprises 97 residues: Co-chaperonin GroES (97 aa).

This sequence belongs to the GroES chaperonin family. Heptamer of 7 subunits arranged in a ring. Interacts with the chaperonin GroEL.

It is found in the cytoplasm. Functionally, together with the chaperonin GroEL, plays an essential role in assisting protein folding. The GroEL-GroES system forms a nano-cage that allows encapsulation of the non-native substrate proteins and provides a physical environment optimized to promote and accelerate protein folding. GroES binds to the apical surface of the GroEL ring, thereby capping the opening of the GroEL channel. The sequence is that of Co-chaperonin GroES from Aeromonas salmonicida.